The sequence spans 359 residues: Large ribosomal subunit protein uL3 (359 aa).

The disordered stretch occupies residues 336–359 (VRPPAKRPPAEAPQITYISRESKQ).

Belongs to the universal ribosomal protein uL3 family. As to quaternary structure, part of the 50S ribosomal subunit. Forms a cluster with proteins L14 and L24e.

One of the primary rRNA binding proteins, it binds directly near the 3'-end of the 23S rRNA, where it nucleates assembly of the 50S subunit. This Thermococcus sibiricus (strain DSM 12597 / MM 739) protein is Large ribosomal subunit protein uL3.